Reading from the N-terminus, the 384-residue chain is Thylakoid membrane protein TERC, chloroplastic (384 aa).

Residues 1–48 (MSLASVIHHGILPPAKSDRIFLTIPVFPPDFRARGWTKSPFSLLINPS) constitute a chloroplast transit peptide. Residues 49-115 (LASAANRRLS…DYQQEETYKT (67 aa)) are Stromal-facing. Positions 68-104 (GIDQEDEEKESRELLPHKNDENATTSRSSSSVDSGGL) are disordered. Residues 76-88 (KESRELLPHKNDE) show a composition bias toward basic and acidic residues. The helical transmembrane segment at 116-136 (SFKTVALCVGTAVAFGIGIGL) threads the bilayer. Over 137–145 (KEGVGKASE) the chain is Lumenal, thylakoid. Residues 146–166 (FFAGYILEQSLSVDNLFVFVL) form a helical membrane-spanning segment. Residues 167–180 (VFKYFKVPLMYQNK) are Stromal-facing. A helical membrane pass occupies residues 181–201 (VLTYGIAGAIVFRFTLILLGT). Over 202–206 (ATLQK) the chain is Lumenal, thylakoid. A helical transmembrane segment spans residues 207–227 (FEAVNLLLAAVLLYSSFKLFA). Over 228 to 275 (SEEDDTDLSDNFIVKTCQRFIPVTSSYDGNRFFTKHDGILKATPLLLT) the chain is Stromal. Residues 276 to 296 (VAVIELSDIAFAVDSIPAVFG) traverse the membrane as a helical segment. Topologically, residues 297–301 (VTRDP) are lumenal, thylakoid. The chain crosses the membrane as a helical span at residues 302-322 (FIVLTSNLFAILGLRSLYTLI). Residues 323–335 (SEGMDELEYLQPS) are Stromal-facing. Residues 336–356 (IAVVLGFIGVKMILDFFGFHI) traverse the membrane as a helical segment. Residue serine 357 is a topological domain, lumenal, thylakoid. A helical membrane pass occupies residues 358–378 (TEASLGVVALSLSTGVLLSLT). Residues 379-384 (NKSSDS) lie on the Stromal side of the membrane.

As to quaternary structure, interacts with ALB3. In terms of tissue distribution, expressed in roots, rosette and cauline leaves, stems and flowers.

The protein localises to the plastid. It localises to the chloroplast thylakoid membrane. In terms of biological role, integral thylakoid membrane protein that plays a crucial role in thylakoid membrane biogenesis and thylakoid formation in early chloroplast development. Is essential for de novo synthesis of photosystem II (PSII) core proteins and required for efficient insertion of thylakoid membrane proteins, presumably via interaction with ALB3. May assist synthesis of thylakoid membrane proteins at the membrane insertion step. In Arabidopsis thaliana (Mouse-ear cress), this protein is Thylakoid membrane protein TERC, chloroplastic.